A 364-amino-acid chain; its full sequence is MASLPKPTPLLKDELDIVIPTIRNLDFLEMWRPFFEQYHLIIVQDGDPSKVIKVPEGFDYELYNRNDINRILGPKASCISFKDSACRCFGYMVSKKKYIYTIDDDCFVAKDPTGHEINALEQHIKNLLSPSTPFFFNTLYDPYREGTDFVRGYPFSLREGVPTAVSHGLWLNIPDYDAPTQLVKPHERNTRFVDAVLTIPKGSLFPMCGMNLAFNRELIGPAMYFGLMGDGQPIGRYDDMWAGWCIKVICDHLGYGVKTGLPYIWHSKASNPFVNLKKEYKGIFWQEEIIPFFQAATLSKDCTSVQKCYIELSKQVKEKLGTIDPYFIKLADAMVTWVEAWDEINNNKSEETTSTKASEVAATK.

Positions 103–105 (DDD) match the DXD motif motif. N-linked (Glc...) arginine glycosylation is present at Arg-151.

Belongs to the RGP family. Homopentamer or homohexamer. The cofactor is Mn(2+). It depends on Mg(2+) as a cofactor. Post-translationally, reversibly glycosylated by UDP-glucose, UDP-xylose and UDP-galactose, but not UDP-mannose.

Its subcellular location is the secreted. The protein resides in the cell wall. The protein localises to the cell junction. It is found in the plasmodesma. It localises to the golgi apparatus. It catalyses the reaction UDP-beta-L-arabinofuranose = UDP-beta-L-arabinopyranose. With respect to regulation, inhibited by inhibitor protein (IP) which may be a form of sucrose synthase. Probable UDP-L-arabinose mutase involved in the biosynthesis of cell wall non-cellulosic polysaccharides. Was initially shown to possess an autoglycosylating activity which is dependent on the presence of UDP-glucose and manganese. The protein is Probable UDP-arabinopyranose mutase 1 of Pisum sativum (Garden pea).